We begin with the raw amino-acid sequence, 199 residues long: UPF0301 protein Vapar_4617 (199 aa).

The protein belongs to the UPF0301 (AlgH) family.

This is UPF0301 protein Vapar_4617 from Variovorax paradoxus (strain S110).